We begin with the raw amino-acid sequence, 408 residues long: Imidazolonepropionase (408 aa).

Residues His-66 and His-68 each contribute to the Fe(3+) site. Zn(2+) contacts are provided by His-66 and His-68. Arg-75, Tyr-138, and His-171 together coordinate 4-imidazolone-5-propanoate. Tyr-138 is a binding site for N-formimidoyl-L-glutamate. Residue His-236 participates in Fe(3+) binding. His-236 serves as a coordination point for Zn(2+). Gln-239 lines the 4-imidazolone-5-propanoate pocket. A Fe(3+)-binding site is contributed by Asp-311. Asp-311 is a Zn(2+) binding site. 2 residues coordinate N-formimidoyl-L-glutamate: Asn-313 and Gly-315. Ser-316 contributes to the 4-imidazolone-5-propanoate binding site.

The protein belongs to the metallo-dependent hydrolases superfamily. HutI family. It depends on Zn(2+) as a cofactor. Fe(3+) is required as a cofactor.

It is found in the cytoplasm. The catalysed reaction is 4-imidazolone-5-propanoate + H2O = N-formimidoyl-L-glutamate. The protein operates within amino-acid degradation; L-histidine degradation into L-glutamate; N-formimidoyl-L-glutamate from L-histidine: step 3/3. Its function is as follows. Catalyzes the hydrolytic cleavage of the carbon-nitrogen bond in imidazolone-5-propanoate to yield N-formimidoyl-L-glutamate. It is the third step in the universal histidine degradation pathway. This is Imidazolonepropionase from Idiomarina loihiensis (strain ATCC BAA-735 / DSM 15497 / L2-TR).